We begin with the raw amino-acid sequence, 467 residues long: UDP-N-acetylmuramate--L-alanine ligase (467 aa).

114-120 (GTHGKTT) is a binding site for ATP.

Belongs to the MurCDEF family.

Its subcellular location is the cytoplasm. The catalysed reaction is UDP-N-acetyl-alpha-D-muramate + L-alanine + ATP = UDP-N-acetyl-alpha-D-muramoyl-L-alanine + ADP + phosphate + H(+). Its pathway is cell wall biogenesis; peptidoglycan biosynthesis. Cell wall formation. This is UDP-N-acetylmuramate--L-alanine ligase from Azorhizobium caulinodans (strain ATCC 43989 / DSM 5975 / JCM 20966 / LMG 6465 / NBRC 14845 / NCIMB 13405 / ORS 571).